The primary structure comprises 591 residues: ATP-dependent lipid A-core flippase (591 aa).

5 helical membrane passes run 34–54 (LILAVLLMAGAAATQPTLAVI), 71–91 (IWSVPLAVIGLILLRGVCNFF), 158–178 (LVVISLIAVLLYMSWLLTVII), 258–278 (LTPLTQVCIAVAVGAVIAVAL), and 285–305 (TLTAGAFAAFMSALAQIFDPI). One can recognise an ABC transmembrane type-1 domain in the interval 35-317 (ILAVLLMAGA…LTNLASKMQK (283 aa)). The ABC transporter domain occupies 350 to 586 (IEFRQIGHRF…GGLYATLYNM (237 aa)). Residue 384 to 391 (GRSGSGKT) coordinates ATP.

It belongs to the ABC transporter superfamily. Lipid exporter (TC 3.A.1.106) family. Homodimer.

It localises to the cell inner membrane. The enzyme catalyses ATP + H2O + lipid A-core oligosaccharideSide 1 = ADP + phosphate + lipid A-core oligosaccharideSide 2.. In terms of biological role, involved in lipopolysaccharide (LPS) biosynthesis. Translocates lipid A-core from the inner to the outer leaflet of the inner membrane. Transmembrane domains (TMD) form a pore in the inner membrane and the ATP-binding domain (NBD) is responsible for energy generation. The protein is ATP-dependent lipid A-core flippase of Bordetella avium (strain 197N).